Reading from the N-terminus, the 1334-residue chain is CRISPR-associated endonuclease Cas9 (1334 aa).

The active-site For RuvC-like nuclease domain is the Asp-10. Asp-10, Glu-765, and Glu-769 together coordinate Mn(2+). Residues 773-924 form the HNH Cas9-type domain; the sequence is TGKGKNNSRP…DKARFIHRQL (152 aa). His-843 functions as the Proton acceptor for HNH nuclease domain in the catalytic mechanism. His-986 contacts Mn(2+).

This sequence belongs to the CRISPR-associated protein Cas9 family. Subtype II-A subfamily. As to quaternary structure, monomer. Binds crRNA and tracrRNA. It depends on Mg(2+) as a cofactor.

Functionally, CRISPR (clustered regularly interspaced short palindromic repeat) is an adaptive immune system that provides protection against mobile genetic elements (viruses, transposable elements and conjugative plasmids). CRISPR clusters contain spacers, sequences complementary to antecedent mobile elements, and target invading nucleic acids. CRISPR clusters are transcribed and processed into CRISPR RNA (crRNA). In type II CRISPR systems correct processing of pre-crRNA requires a trans-encoded small RNA (tracrRNA), endogenous ribonuclease 3 (rnc) and this protein. The tracrRNA serves as a guide for ribonuclease 3-aided processing of pre-crRNA. Subsequently Cas9/crRNA/tracrRNA endonucleolytically cleaves linear or circular dsDNA target complementary to the spacer; Cas9 is inactive in the absence of the 2 guide RNAs (gRNA). Cas9 recognizes the protospacer adjacent motif (PAM) in the CRISPR repeat sequences to help distinguish self versus nonself, as targets within the bacterial CRISPR locus do not have PAMs. PAM recognition is also required for catalytic activity. In Listeria innocua serovar 6a (strain ATCC BAA-680 / CLIP 11262), this protein is CRISPR-associated endonuclease Cas9.